A 1357-amino-acid polypeptide reads, in one-letter code: DNA-directed RNA polymerase subunit beta (1357 aa).

It belongs to the RNA polymerase beta chain family. The RNAP catalytic core consists of 2 alpha, 1 beta, 1 beta' and 1 omega subunit. When a sigma factor is associated with the core the holoenzyme is formed, which can initiate transcription.

The enzyme catalyses RNA(n) + a ribonucleoside 5'-triphosphate = RNA(n+1) + diphosphate. Functionally, DNA-dependent RNA polymerase catalyzes the transcription of DNA into RNA using the four ribonucleoside triphosphates as substrates. This Pseudomonas paraeruginosa (strain DSM 24068 / PA7) (Pseudomonas aeruginosa (strain PA7)) protein is DNA-directed RNA polymerase subunit beta.